The following is a 1507-amino-acid chain: Nonribosomal peptide synthetase ataP (1507 aa).

Residues 1–72 form the Carrier 1 domain; the sequence is MQINIRNEIA…DIISRSTGMY (72 aa). An O-(pantetheine 4'-phosphoryl)serine modification is found at Ser-33. The tract at residues 98–119 is disordered; sequence TPSPSPSGPSTGCPTPDTLDTT. The span at 105-115 shows a compositional bias: low complexity; the sequence is GPSTGCPTPDT. Residues 163-429 form a condensation 1 region; that stretch reads TRMAWQQVLE…NRVFRQLVQL (267 aa). The tract at residues 514-893 is adenylation; the sequence is AAAENPEACA…GRNDRQIKLR (380 aa). The region spanning 988–1065 is the Carrier 2 domain; that stretch reads NEMSPTEQRV…DLSQRIDKLQ (78 aa). The residue at position 1025 (Ser-1025) is an O-(pantetheine 4'-phosphoryl)serine. Residues 1099-1471 form a condensation 2 region; the sequence is TSNTSFTVSF…MTALRLLIKN (373 aa).

The protein belongs to the NRP synthetase family.

It participates in mycotoxin biosynthesis. Nonribosomal peptide synthetase; part of the gene cluster that mediates the biosynthesis of acetylaranotin, a member of the epipolythiodioxopiperazine (ETP) class of toxins characterized by a disulfide-bridged cyclic dipeptide. The first step of acetylaranotin biosynthesis is performed by the NRPS ataP which produces diketopiperazine cyclo-L-Phe-L-Phe via the condensation of 2 phenylalanines (L-Phe). The ataC domain of ataTC then catalyzes the formation of bishydroxylation of cyclo-L-Phe-L-Phe. The glutathione S-transferase domain ataG in ataIMG further catalyzes the conjugation of two glutathiones to the bishydroxylated intermediate. Next, the dipeptidase ataJ removes the Glu residues. The following step is performed by the carbon sulfur lyase domain ataI of ataIMG which may convert the bis-cysteinyl adduct to yield an epidithiol intermediate. The ataT domain from ataTC then catalyzes the oxidation of the free dithiols, followed by a cyclization step catalyzed by the cytochrome P450 ataF. AtaF probably acts as an epoxidase to promote a dual epoxidation formation at C8 and C9 along with C8' and C9', followed by the spontaneous nucleophilic attack of the amide nitrogens N10 and N10' to yield an intermediate with the pyrrolidine partial structure. The final steps of acetylaranotin biosynthesis involve the acetylation and ring rearrangement of an epitetrathiodiketopiperazine intermediate to produce acetylaranotin. AtaH probably catalyzes the acetylation of epitetrathiodiketopiperazine to produce a diacetate and ataY is responsible for the formation of the dihydrooxepin moiety that converts the diacetate intermediate to acetylaranotin via acetylapoaranotin. Both enzymes could function independently in the absence of the other. The acetylaranotin bis-thiomethyltransferase ataS located outside of acetylaranotin gene cluster is the main thiomethyltransferase responsible for converting acetylaranotin and its related intermediates to their methylated forms. The protein is Nonribosomal peptide synthetase ataP of Aspergillus terreus (strain NIH 2624 / FGSC A1156).